A 700-amino-acid chain; its full sequence is Elongation factor G (700 aa).

Positions 8–290 (DRYRNVGIMA…AMIMYMPSPL (283 aa)) constitute a tr-type G domain. GTP-binding positions include 17 to 24 (AHIDAGKT), 88 to 92 (DTPGH), and 142 to 145 (NKMD).

It belongs to the TRAFAC class translation factor GTPase superfamily. Classic translation factor GTPase family. EF-G/EF-2 subfamily.

The protein localises to the cytoplasm. In terms of biological role, catalyzes the GTP-dependent ribosomal translocation step during translation elongation. During this step, the ribosome changes from the pre-translocational (PRE) to the post-translocational (POST) state as the newly formed A-site-bound peptidyl-tRNA and P-site-bound deacylated tRNA move to the P and E sites, respectively. Catalyzes the coordinated movement of the two tRNA molecules, the mRNA and conformational changes in the ribosome. The polypeptide is Elongation factor G (Vesicomyosocius okutanii subsp. Calyptogena okutanii (strain HA)).